A 350-amino-acid polypeptide reads, in one-letter code: MNLAWKEIKFYKFRFILIMFIIFLMAIMVLFISGLAQGLARENISIFDQIKGNQFVVQKMKEPQLEKSILSRSKQDNISKIIDEKPFKMAGKTFKINGNEENVMAINSVKNHQPNLKSGHYPKNGNQIAINEKLTAEGLYLDDKVKVKGDDTTYKVVGILKNTMYSHSNIVMMDQSKIEQSSNVATFYVTNQLSKSDKNKINHIKGVQTATTDDITSNIASYKAEQTPLDMMIISLYIITAIVLSAFFYVMTIQKTSEIGILKAIGITTKHLLTSLILQISMITFIGVAIAEVVIFLISQILPVSMPFHIDMHNIIIVLVVFMIVGLIGTSLSFIKLIKIDPIEAIGGGQ.

4 helical membrane passes run 15 to 35 (FILIMFIIFLMAIMVLFISGL), 233 to 253 (IISLYIITAIVLSAFFYVMTI), 276 to 296 (LILQISMITFIGVAIAEVVIF), and 315 to 335 (IIIVLVVFMIVGLIGTSLSFI).

This sequence belongs to the ABC-4 integral membrane protein family. HrtB subfamily. The complex is composed of two ATP-binding proteins (HrtA), two transmembrane proteins (HrtB) and a solute-binding protein.

Its subcellular location is the cell membrane. Part of the ABC transporter complex hrt involved in hemin import. Responsible for the translocation of the substrate across the membrane. The sequence is that of Putative hemin transport system permease protein HrtB (hrtB) from Staphylococcus epidermidis (strain ATCC 12228 / FDA PCI 1200).